Here is a 243-residue protein sequence, read N- to C-terminus: Probable fructoselysine utilization operon transcriptional repressor (243 aa).

The HTH gntR-type domain occupies glutamine 10–glutamine 78. Positions glutamate 38–serine 57 form a DNA-binding region, H-T-H motif.

Its pathway is carbohydrate metabolism; fructoselysine degradation [regulation]. May regulate the transcription of the frlABCDR operon, involved in the utilization of fructoselysine and psicoselysine. In Escherichia coli (strain K12), this protein is Probable fructoselysine utilization operon transcriptional repressor.